A 669-amino-acid chain; its full sequence is Galactocerebrosidase (669 aa).

An N-terminal signal peptide occupies residues 1 to 26; the sequence is MTAAAGSAGHAAVPLLLCALLVPGGA. Positions 93, 135, and 181 each coordinate substrate. Glutamate 182 acts as the Proton donor/acceptor in catalysis. The active-site Nucleophile is glutamate 258. Residues cysteine 271 and cysteine 378 are joined by a disulfide bond. Residue asparagine 363 is glycosylated (N-linked (GlcNAc...) asparagine). Arginine 380 contacts substrate. Asparagine 387, asparagine 543, and asparagine 586 each carry an N-linked (GlcNAc...) asparagine glycan.

It belongs to the glycosyl hydrolase 59 family.

Its subcellular location is the lysosome. The catalysed reaction is a beta-D-galactosyl-(1&lt;-&gt;1')-N-acylsphing-4-enine + H2O = an N-acylsphing-4-enine + D-galactose. The enzyme catalyses beta-D-galactosyl-(1&lt;-&gt;1)-sphing-4-enine + H2O = sphing-4-enine + D-galactose. It catalyses the reaction a D-galactosylceramide + H2O = an N-acyl-sphingoid base + D-galactose. Hydrolyzes the galactose ester bonds of glycolipids such as galactosylceramide and galactosylsphingosine. Enzyme with very low activity responsible for the lysosomal catabolism of galactosylceramide, a major lipid in myelin, kidney and epithelial cells of small intestine and colon. The polypeptide is Galactocerebrosidase (Canis lupus familiaris (Dog)).